The primary structure comprises 803 residues: 3',5'-cyclic-AMP phosphodiesterase 4D (803 aa).

The disordered stretch occupies residues 1–103; it reads MEAEGSSVPA…SGASRVRHRG (103 aa). Residues His52 and His56 each carry the phosphoserine modification. The span at 58–85 shows a compositional bias: pro residues; that stretch reads PPPPPPSPQPQLQPPPPPPLPPPPPPPG. Ser137, Ser294, Ser296, Ser343, and Ser370 each carry phosphoserine. The tract at residues 338–358 is disordered; the sequence is EVEIPSPTQKEKEKKKRPMSQ. One can recognise a PDEase domain in the interval 381–710; that stretch reads VKTEQEDVLA…EWYQSTIPQS (330 aa). Lys382 participates in a covalent cross-link: Glycyl lysine isopeptide (Lys-Gly) (interchain with G-Cter in SUMO). The Proton donor role is filled by His457. Residue His457 participates in 3',5'-cyclic AMP binding. His457 contacts AMP. Residues His461, His497, Asp498, and Asp615 each contribute to the Zn(2+) site. The AMP site is built by Asp498, Asp615, Asn618, Gln666, and Phe669. Position 498 (Asp498) interacts with Mg(2+). Asp498 is a Mn(2+) binding site. 3',5'-cyclic AMP contacts are provided by Gln666 and Phe669. Disordered stretches follow at residues 705–724 and 732–803; these read STIPQSPSPAPDDQEDGRQG and ELTL…CPDT. Residues 757 to 768 are compositionally biased toward polar residues; it reads CSDSKTLCTQDS. Positions 774-789 are enriched in acidic residues; the sequence is PLDEQVEEEAVAEEES.

Belongs to the cyclic nucleotide phosphodiesterase family. PDE4 subfamily. In terms of assembly, homodimer for the long isoforms. Isoforms with truncated N-termini are monomeric. Binds ARRB2. Isoform 33 is part of a ternary complex containing PRKAR2A, PRKAR2B and AKAP9. Identified in a complex composed of RYR1, PDE4D, PKA, FKBP1A and protein phosphatase 1 (PP1). Interacts with PDE4DIP. Isoform 5 interacts (via N-terminal region) with SHANK2 (via proline-rich region); the interaction is increased in a PKA-dependent manner. Isoform 33, isoform 4, isoform 7, isoform 8 and isoform 9 but not isoform 32 and isoform 6 interact with SHANK2. Isoform 31 interacts weakly with SHANK2. Requires Zn(2+) as cofactor. The cofactor is Mg(2+). Mn(2+) is required as a cofactor. Post-translationally, isoform 1 and isoform 9 are rapidly activated by PKA through phosphorylation. Long isoforms that share a conserved PKA phosphorylation site in the N-terminus are also activated. In terms of processing, sumoylation of long isoforms by PIAS4 augments their activation by PKA phosphorylation and represses their inhibition by ERK phosphorylation. In terms of tissue distribution, expressed in epithelial cells. Isoform 33, isoform 4, isoform 5 and isoform 9 are expressed in brain. Isoform 33, isoform 5, isoform 8 and isoform 9 are expressed in heart (at protein level). Isoform 4 and isoform 6 are strongly expressed in cortex and cerebellum. Isoform 7 is strongly expressed in cortex and testis; weakly expressed in kidney, lung, spleen and cerebellum. Isoform 8 is strongly expressed in lung, heart and liver. Isoform 31, isoform 32, isoform 33, isoform 5 and isoform 9 are widely distributed.

It localises to the apical cell membrane. The protein resides in the cytoplasm. Its subcellular location is the membrane. The protein localises to the cytoskeleton. It is found in the microtubule organizing center. It localises to the centrosome. The catalysed reaction is 3',5'-cyclic AMP + H2O = AMP + H(+). Its pathway is purine metabolism; 3',5'-cyclic AMP degradation; AMP from 3',5'-cyclic AMP: step 1/1. With respect to regulation, activated by phosphatidic acid. Inhibited by rolipram. Its function is as follows. Hydrolyzes the second messenger cAMP, which is a key regulator of many important physiological processes. The protein is 3',5'-cyclic-AMP phosphodiesterase 4D (Pde4d) of Rattus norvegicus (Rat).